Consider the following 248-residue polypeptide: Probable transcriptional regulatory protein PSPTO_3980 (248 aa).

The protein belongs to the TACO1 family.

The protein resides in the cytoplasm. The protein is Probable transcriptional regulatory protein PSPTO_3980 of Pseudomonas syringae pv. tomato (strain ATCC BAA-871 / DC3000).